Here is a 273-residue protein sequence, read N- to C-terminus: MHDAQVRVAIAGAGGRMGRQLIQAALQMEGVVLGAALEREGSTLLGTDAGELAGAGHSGVTVQSSLDAVKADFDVFIDFTRPEGTLEHLAFCRQHGKGMIIGTTGFDDAGKQAIKDAAQDIAIVFAANFSVGVNVMLKLLEKAAKVMGDYTDIEIIEAHHRHKVDAPSGTALAMGEAIAYALDKDLKDCAVYTREGHTGERVPGTIGFATVRAGDIVGEHTAIFADIGERVEITHKASSRMTFANGAVRSALWLKSKGNGLFDMRDVLNLNEL.

NAD(+) contacts are provided by residues 12-17 (GAGGRM) and E38. Residue R39 coordinates NADP(+). NAD(+)-binding positions include 102–104 (GTT) and 126–129 (AANF). H159 (proton donor/acceptor) is an active-site residue. H160 serves as a coordination point for (S)-2,3,4,5-tetrahydrodipicolinate. K163 acts as the Proton donor in catalysis. Residue 169 to 170 (GT) participates in (S)-2,3,4,5-tetrahydrodipicolinate binding.

It belongs to the DapB family. As to quaternary structure, homotetramer.

The protein resides in the cytoplasm. It carries out the reaction (S)-2,3,4,5-tetrahydrodipicolinate + NAD(+) + H2O = (2S,4S)-4-hydroxy-2,3,4,5-tetrahydrodipicolinate + NADH + H(+). It catalyses the reaction (S)-2,3,4,5-tetrahydrodipicolinate + NADP(+) + H2O = (2S,4S)-4-hydroxy-2,3,4,5-tetrahydrodipicolinate + NADPH + H(+). The protein operates within amino-acid biosynthesis; L-lysine biosynthesis via DAP pathway; (S)-tetrahydrodipicolinate from L-aspartate: step 4/4. In terms of biological role, catalyzes the conversion of 4-hydroxy-tetrahydrodipicolinate (HTPA) to tetrahydrodipicolinate. The polypeptide is 4-hydroxy-tetrahydrodipicolinate reductase (Enterobacter sp. (strain 638)).